The sequence spans 112 residues: UPF0102 protein Spea_0251 (112 aa).

Belongs to the UPF0102 family.

The sequence is that of UPF0102 protein Spea_0251 from Shewanella pealeana (strain ATCC 700345 / ANG-SQ1).